Reading from the N-terminus, the 122-residue chain is Large ribosomal subunit protein uL14c (122 aa).

Belongs to the universal ribosomal protein uL14 family. In terms of assembly, part of the 50S ribosomal subunit.

It localises to the plastid. Binds to 23S rRNA. In Helicosporidium sp. subsp. Simulium jonesii (Green alga), this protein is Large ribosomal subunit protein uL14c (rpl14).